The chain runs to 323 residues: Elongation factor P--(R)-beta-lysine ligase (323 aa).

A substrate-binding site is contributed by 74–76 (SPE). ATP-binding positions include 98 to 100 (RNE) and asparagine 107. Substrate is bound at residue tyrosine 116. ATP is bound at residue 242-243 (EL). Glutamate 249 contributes to the substrate binding site. ATP is bound at residue glycine 298.

Belongs to the class-II aminoacyl-tRNA synthetase family. EpmA subfamily. Homodimer.

The enzyme catalyses D-beta-lysine + L-lysyl-[protein] + ATP = N(6)-((3R)-3,6-diaminohexanoyl)-L-lysyl-[protein] + AMP + diphosphate + H(+). In terms of biological role, with EpmB is involved in the beta-lysylation step of the post-translational modification of translation elongation factor P (EF-P). Catalyzes the ATP-dependent activation of (R)-beta-lysine produced by EpmB, forming a lysyl-adenylate, from which the beta-lysyl moiety is then transferred to the epsilon-amino group of a conserved specific lysine residue in EF-P. The sequence is that of Elongation factor P--(R)-beta-lysine ligase from Vibrio vulnificus (strain YJ016).